Here is a 436-residue protein sequence, read N- to C-terminus: UDP-N-acetylmuramate--L-alanine ligase (436 aa).

Residue 108-114 participates in ATP binding; sequence GAHGKTS.

The protein belongs to the MurCDEF family.

Its subcellular location is the cytoplasm. The catalysed reaction is UDP-N-acetyl-alpha-D-muramate + L-alanine + ATP = UDP-N-acetyl-alpha-D-muramoyl-L-alanine + ADP + phosphate + H(+). It participates in cell wall biogenesis; peptidoglycan biosynthesis. Its function is as follows. Cell wall formation. The protein is UDP-N-acetylmuramate--L-alanine ligase of Bacillus cereus (strain Q1).